The sequence spans 948 residues: ATPase 2, plasma membrane-type (948 aa).

S2 is subject to N-acetylserine. Residues 2-61 (SSLEDIKNETVDLEKIPIEEVFQQLKCSREGLTTQEGEDRIQIFGPNKLEEKKESKLLKF) lie on the Cytoplasmic side of the membrane. Residues 62–81 (LGFMWNPLSWVMEMAAIMAI) traverse the membrane as a helical segment. Over 82-93 (ALANGDGRPPDW) the chain is Extracellular. A helical transmembrane segment spans residues 94–114 (QDFVGIICLLVINSTISFIEE). Residues 115–243 (NNAGNAAAAL…GHFQKVLTAI (129 aa)) are Cytoplasmic-facing. Residues 244–264 (GNFCICSIAIGMVIEIIVMYP) traverse the membrane as a helical segment. Topologically, residues 265-273 (IQRRKYRDG) are extracellular. The helical transmembrane segment at 274 to 291 (IDNLLVLLIGGIPIAMPT) threads the bilayer. At 292–643 (VLSVTMAIGS…TSRAIFQRMK (352 aa)) the chain is on the cytoplasmic side. D329 acts as the 4-aspartylphosphate intermediate in catalysis. Positions 588 and 592 each coordinate Mg(2+). The chain crosses the membrane as a helical span at residues 644-665 (NYTIYAVSITIRIVFGFMLIAL). Residues 666-670 (IWEFD) are Extracellular-facing. A helical transmembrane segment spans residues 671-693 (FSAFMVLIIAILNDGTIMTISKD). Over 694–709 (RVKPSPTPDSWKLKEI) the chain is Cytoplasmic. Residues 710 to 730 (FATGVVLGGYQAIMTVIFFWA) form a helical membrane-spanning segment. Residues 731–751 (AHKTDFFSDTFGVRSIRDNNH) are Extracellular-facing. A helical transmembrane segment spans residues 752-772 (ELMGAVYLQVSIISQALIFVT). The Cytoplasmic segment spans residues 773-784 (RSRSWSFVERPG). The helical transmembrane segment at 785–805 (ALLMIAFLIAQLIATLIAVYA) threads the bilayer. Topologically, residues 806 to 813 (NWEFAKIR) are extracellular. The helical transmembrane segment at 814–834 (GIGWGWAGVIWLYSIVTYFPL) threads the bilayer. Residues 835-948 (DVFKFAIRYI…DIETPSHYTV (114 aa)) are Cytoplasmic-facing. T881 carries the post-translational modification Phosphothreonine. S899 is modified (phosphoserine). S931 carries the post-translational modification Phosphoserine; by CIPK11. The interval 946–948 (YTV) is interaction with 14-3-3 proteins. T947 is modified (phosphothreonine).

It belongs to the cation transport ATPase (P-type) (TC 3.A.3) family. Type IIIA subfamily. As to quaternary structure, binds to 14-3-3 proteins. The binding is induced by phosphorylation of Thr-947 and it activates the H(+)-ATPase. Interacts (via the R-domain) with PSY1R (via C-terminus). Part of a functional complex containing PSKR1, BAK1, CNGC17, and AHA. Interacts with CNGC17 and PSKR1. Interacts with PP2C67/PP2C-D1 at the plasma membrane. Interacts with AHA1. Phosphorylated, probably by PHOT1 and PHOT2, at C-terminal Thr-947 in guard cells in response to blue light to induce stomatal opening. In terms of processing, phosphorylation at Thr-881 by PSY1R. This phosphorylation activates proton pumping. Decreased phosphorylation in response to flg22 elicitation. Post-translationally, phosphorylation at Ser-899 is specifically induced by RALF1, thus leading to the inhibition of proton transport. Increased phosphorylation in response to flg22 elicitation. Phosphorylation of Thr-947 induces the binding to 14-3-3 proteins, but phosphorylation of Ser-931 interferes with this binding no matter whether Thr-947 is phosphorylated or not. Decreased phosphorylation in response to flg22 elicitation. Phosphorylation of Thr-947 is enhanced by the presence of brassinolide (BL) via the BRI1-BIN2 pathway and prior the trigger of hypocotyl elongation. Inactivated by PP2C67/PP2C-D1-mediated Thr-947 dephosphorylation; SAUR19 inhibits the action of PP2C67/PP2C-D1 and thus promotes the active phosphorylated form. In terms of processing, abscisic acid induces dephosphorylation of AHA2 in etiolated seedlings, suppressing ATP hydrolysis and hypocotyl elongation. In terms of tissue distribution, higher levels in roots than in shoots. Expressed in epidermal and root cortex cells, in phloem, xylem and root hairs. Detected in cotyledons, leaves, hypocotyls, roots and root hairs. Expressed in guard cells and mesophyll cells.

The protein resides in the cell membrane. The catalysed reaction is ATP + H2O + H(+)(in) = ADP + phosphate + 2 H(+)(out). With respect to regulation, regulated by an auto-inhibitory C-terminal domain that can be displaced by phosphorylation of Thr-947 and the subsequent binding of 14-3-3 proteins. Negatively regulated by PKS5. PKS5 phosphorylates Ser-931, inhibiting interaction with the activating 14-3-3 protein. Positively regulated by PSY1R. PSY1R phosphorylates Thr-881, situated in the auto-inhibitory region I of the C-terminal domain, causing pump activation. Negatively regulated by the secreted peptide RALF. After specific binding to FERONIA, RALF causes phosphorylation at Ser-899, mediating the inhibition of proton transport. Activated by lysophospholipids, without the involvement of phosphorylation of Thr-947. This activation is critically dependent on the single autoinhibitory residue Leu-919. Repressed by PP2C-D phosphatases (e.g. PP2C67/PP2C-D1 and PP2C64/PP2C-D5) which dephosphorylates Thr-947. Triggered by SAUR19 via phosphorylation of the C-terminal autoinhibitory domain (e.g. Thr-947), as a result of the inhibition of PP2C67/PP2C-D1. Phosphorylation on Thr residues is repressed by tyrphostin 9, sphingosine, GW5074 and BML-265. By contrast, the fungal phytotoxin fusicoccin (FC) promotes phosphorylation of Thr-947 independently to BHP, thus leading to large stomatal opening. Functionally, the plasma membrane H(+) ATPase of plants and fungi generates a proton gradient that drives the active transport of nutrients by H(+)-symport. The resulting external acidification and/or internal alkinization may mediate growth responses. Involved in maintaining the membrane potential and delta-pH, together forming the plasma membrane protonmotive force (PMF) required for root and hypocotyl elongation and root tropism. Important for root growth and development during different nitrogen regimes. Forms a functional cation-translocating unit with CNGC17 that is activated by PSKR1/BAK1 and possibly other BAK1/RLK complexes. Promotes stomatal opening in response to blue light. The sequence is that of ATPase 2, plasma membrane-type from Arabidopsis thaliana (Mouse-ear cress).